Reading from the N-terminus, the 201-residue chain is uncharacterized protein (201 aa).

2 disordered regions span residues 46–80 and 143–201; these read PLVNPKYDNPQIESAELDGSQNDNYSTDTSQSYDE and SSTS…ANPA. 2 stretches are compositionally biased toward polar residues: residues 64 to 78 and 143 to 167; these read GSQNDNYSTDTSQSY and SSTSAKTIQNDKPATDVSLGSNSPA.

This is an uncharacterized protein from Legionella pneumophila.